A 37-amino-acid chain; its full sequence is Large ribosomal subunit protein bL36 (37 aa).

The protein belongs to the bacterial ribosomal protein bL36 family.

In Methylibium petroleiphilum (strain ATCC BAA-1232 / LMG 22953 / PM1), this protein is Large ribosomal subunit protein bL36.